The sequence spans 441 residues: Maltokinase (441 aa).

It belongs to the aminoglycoside phosphotransferase family. Monomer.

It carries out the reaction D-maltose + ATP = alpha-maltose 1-phosphate + ADP + H(+). It functions in the pathway glycan biosynthesis; glycogen biosynthesis. Its function is as follows. Catalyzes the ATP-dependent phosphorylation of maltose to maltose 1-phosphate. Is involved in a branched alpha-glucan biosynthetic pathway from trehalose, together with TreS, GlgE and GlgB. This chain is Maltokinase (mak), found in Mycolicibacterium vanbaalenii (strain DSM 7251 / JCM 13017 / BCRC 16820 / KCTC 9966 / NRRL B-24157 / PYR-1) (Mycobacterium vanbaalenii).